The sequence spans 546 residues: Zinc metalloproteinase nas-9 (546 aa).

Residues 1 to 14 form the signal peptide; the sequence is MIFLLFVVFPFVYA. A propeptide spanning residues 15 to 300 is cleaved from the precursor; that stretch reads QLLPELLAGF…GGGGGGRVPR (286 aa). N-linked (GlcNAc...) asparagine glycosylation occurs at N248. The Peptidase M12A domain maps to 308–507; the sequence is SAVQKWDIWK…IRLLKKMYCR (200 aa). Cystine bridges form between C347–C506, C372–C392, C510–C546, C517–C539, and C526–C543. Zn(2+) is bound at residue H401. E402 is a catalytic residue. 2 residues coordinate Zn(2+): H405 and H411. The region spanning 510 to 546 is the ShKT domain; sequence CDDQNVHCGTWALHGYCKMKEQMKWMNENCKASCDKC.

The cofactor is Zn(2+). Expressed in hypodermis, uterus and spermatheca.

The protein resides in the secreted. Its function is as follows. Metalloprotease. The polypeptide is Zinc metalloproteinase nas-9 (nas-9) (Caenorhabditis elegans).